The following is a 289-amino-acid chain: 4-diphosphocytidyl-2-C-methyl-D-erythritol kinase (289 aa).

Lysine 10 is an active-site residue. Residue 94 to 104 coordinates ATP; that stretch reads PVAAGLAGGSS. Aspartate 136 is a catalytic residue.

Belongs to the GHMP kinase family. IspE subfamily.

It catalyses the reaction 4-CDP-2-C-methyl-D-erythritol + ATP = 4-CDP-2-C-methyl-D-erythritol 2-phosphate + ADP + H(+). It participates in isoprenoid biosynthesis; isopentenyl diphosphate biosynthesis via DXP pathway; isopentenyl diphosphate from 1-deoxy-D-xylulose 5-phosphate: step 3/6. Catalyzes the phosphorylation of the position 2 hydroxy group of 4-diphosphocytidyl-2C-methyl-D-erythritol. This is 4-diphosphocytidyl-2-C-methyl-D-erythritol kinase from Geobacillus sp. (strain WCH70).